The sequence spans 292 residues: Ribosomal protein L11 methyltransferase (292 aa).

The S-adenosyl-L-methionine site is built by T136, G159, D181, and N228.

This sequence belongs to the methyltransferase superfamily. PrmA family.

The protein resides in the cytoplasm. It catalyses the reaction L-lysyl-[protein] + 3 S-adenosyl-L-methionine = N(6),N(6),N(6)-trimethyl-L-lysyl-[protein] + 3 S-adenosyl-L-homocysteine + 3 H(+). Methylates ribosomal protein L11. The sequence is that of Ribosomal protein L11 methyltransferase from Rhizobium etli (strain ATCC 51251 / DSM 11541 / JCM 21823 / NBRC 15573 / CFN 42).